The sequence spans 88 residues: Centromere protein W (88 aa).

This sequence belongs to the CENP-W/WIP1 family. As to quaternary structure, heterodimer with CENPT; this dimer coassembles with CENPS-CENPX heterodimers at centromeres to form the tetrameric CENP-T-W-S-X complex, which is a subcomplex of the large constitutive centromere-associated network (CCAN, also known as the interphase centromere complex or ICEN). Interacts with NPM1. Highly expressed in ovary, liver, lung and pancreas and to a lower extent in breast and gastrointestinal tract cancers; such as those of the colon, rectum and stomach. Overexpressed in high grade breast invasive tumors. Expressed in many cancer cell types.

It is found in the nucleus. The protein localises to the chromosome. Its subcellular location is the centromere. It localises to the kinetochore. The protein resides in the nucleus matrix. It is found in the nucleolus. Its function is as follows. Component of the CENPA-NAC (nucleosome-associated) complex, a complex that plays a central role in assembly of kinetochore proteins, mitotic progression and chromosome segregation. The CENPA-NAC complex recruits the CENPA-CAD (nucleosome distal) complex and may be involved in incorporation of newly synthesized CENPA into centromeres. Part of a nucleosome-associated complex that binds specifically to histone H3-containing nucleosomes at the centromere, as opposed to nucleosomes containing CENPA. Component of the heterotetrameric CENP-T-W-S-X complex that binds and supercoils DNA, and plays an important role in kinetochore assembly. CENPW has a fundamental role in kinetochore assembly and function. It is one of the inner kinetochore proteins, with most further proteins binding downstream. Required for normal chromosome organization and normal progress through mitosis. This chain is Centromere protein W (CENPW), found in Homo sapiens (Human).